The chain runs to 178 residues: Large ribosomal subunit protein eL20y (178 aa).

Belongs to the eukaryotic ribosomal protein eL20 family.

The protein is Large ribosomal subunit protein eL20y (RPL18AB) of Arabidopsis thaliana (Mouse-ear cress).